A 505-amino-acid polypeptide reads, in one-letter code: Probable cytochrome P450 28c1 (505 aa).

Cys-444 serves as a coordination point for heme.

It belongs to the cytochrome P450 family. Heme serves as cofactor.

It localises to the endoplasmic reticulum membrane. The protein localises to the microsome membrane. Functionally, may be involved in the metabolism of insect hormones and in the breakdown of synthetic insecticides. The chain is Probable cytochrome P450 28c1 (Cyp28c1) from Drosophila melanogaster (Fruit fly).